The chain runs to 349 residues: Succinylglutamate desuccinylase (349 aa).

Residues His70, Glu73, and His166 each coordinate Zn(2+). Residue Glu229 is part of the active site.

This sequence belongs to the AspA/AstE family. Succinylglutamate desuccinylase subfamily. Zn(2+) is required as a cofactor.

It carries out the reaction N-succinyl-L-glutamate + H2O = L-glutamate + succinate. It participates in amino-acid degradation; L-arginine degradation via AST pathway; L-glutamate and succinate from L-arginine: step 5/5. In terms of biological role, transforms N(2)-succinylglutamate into succinate and glutamate. The sequence is that of Succinylglutamate desuccinylase from Burkholderia pseudomallei (strain 1710b).